A 318-amino-acid chain; its full sequence is Protease HtpX homolog (318 aa).

A run of 2 helical transmembrane segments spans residues 6–26 and 28–48; these read TAML…LIGG and AGMM…YWNS. His130 lines the Zn(2+) pocket. Residue Glu131 is part of the active site. His134 lines the Zn(2+) pocket. Helical transmembrane passes span 145 to 165 and 173 to 193; these read ITAT…FFGG and PLGF…AMLV. Glu202 lines the Zn(2+) pocket. Positions 284-318 are disordered; sequence NVSTGPVRAVNPTRKSRSVPNTGRGGSQPPRGPWS.

It belongs to the peptidase M48B family. Zn(2+) is required as a cofactor.

The protein localises to the cell inner membrane. In Rhizobium etli (strain CIAT 652), this protein is Protease HtpX homolog.